The chain runs to 670 residues: E3 ubiquitin-protein ligase MAG2 (670 aa).

Disordered stretches follow at residues 1–84 and 124–145; these read MVEP…TSTR and EVER…RDEH. A compositionally biased stretch (polar residues) spans 20-39; sequence DTLNATSNSSKQGVSNNKRN. Residues 51–66 show a composition bias toward basic and acidic residues; that stretch reads SDGRDNAHNYHGEGRR. Residues 195-250 form an RING-type zinc finger; it reads CSICLSEEPVAPRMVTCGHIFCLSCLLNFFSIEETVKNKETGYSKKKKYKECPLCG. Positions 609 to 670 are disordered; sequence TEDEKASKEN…LFSSNHQALG (62 aa). Residues 610–622 show a composition bias toward basic and acidic residues; that stretch reads EDEKASKENKEFQ. Low complexity predominate over residues 637 to 649; sequence VTDSTDSPPTSNG.

It belongs to the RNF10 family.

Its subcellular location is the cytoplasm. It catalyses the reaction S-ubiquitinyl-[E2 ubiquitin-conjugating enzyme]-L-cysteine + [acceptor protein]-L-lysine = [E2 ubiquitin-conjugating enzyme]-L-cysteine + N(6)-ubiquitinyl-[acceptor protein]-L-lysine.. It functions in the pathway protein modification; protein ubiquitination. Functionally, E3 ubiquitin-protein ligase involved in the degradation of non-functional 18S rRNAs in response to stalled ribosomes. Catalyzes monoubiquitination of RPS3/uS3 in response to stalled ribosomes, initiating a HEL2-dependent response that activates the degradation of non-functional 18S rRNAs. The polypeptide is E3 ubiquitin-protein ligase MAG2 (Saccharomyces cerevisiae (strain ATCC 204508 / S288c) (Baker's yeast)).